Reading from the N-terminus, the 191-residue chain is Thymidylate kinase (191 aa).

Residue 7–14 (GIDTCGKS) participates in ATP binding.

Belongs to the thymidylate kinase family.

The enzyme catalyses dTMP + ATP = dTDP + ADP. In terms of biological role, phosphorylation of dTMP to form dTDP in both de novo and salvage pathways of dTTP synthesis. This chain is Thymidylate kinase, found in Sulfurovum sp. (strain NBC37-1).